Consider the following 397-residue polypeptide: Carbamoyl phosphate synthase small chain (397 aa).

Residues 1–204 (MKHVLRKEKT…NAKLKEKIWH (204 aa)) are CPSase. L-glutamine is bound by residues Ser57, Gly252, and Gly254. Residues 204 to 391 (HVVVYDFGVK…IKLMKKSYNS (188 aa)) form the Glutamine amidotransferase type-1 domain. The active-site Nucleophile is the Cys280. Positions 281, 284, 322, and 325 each coordinate L-glutamine. Residues His364 and Glu366 contribute to the active site.

Belongs to the CarA family. As to quaternary structure, composed of two chains; the small (or glutamine) chain promotes the hydrolysis of glutamine to ammonia, which is used by the large (or ammonia) chain to synthesize carbamoyl phosphate. Tetramer of heterodimers (alpha,beta)4.

The catalysed reaction is hydrogencarbonate + L-glutamine + 2 ATP + H2O = carbamoyl phosphate + L-glutamate + 2 ADP + phosphate + 2 H(+). The enzyme catalyses L-glutamine + H2O = L-glutamate + NH4(+). The protein operates within amino-acid biosynthesis; L-arginine biosynthesis; carbamoyl phosphate from bicarbonate: step 1/1. Its pathway is pyrimidine metabolism; UMP biosynthesis via de novo pathway; (S)-dihydroorotate from bicarbonate: step 1/3. Functionally, small subunit of the glutamine-dependent carbamoyl phosphate synthetase (CPSase). CPSase catalyzes the formation of carbamoyl phosphate from the ammonia moiety of glutamine, carbonate, and phosphate donated by ATP, constituting the first step of 2 biosynthetic pathways, one leading to arginine and/or urea and the other to pyrimidine nucleotides. The small subunit (glutamine amidotransferase) binds and cleaves glutamine to supply the large subunit with the substrate ammonia. The polypeptide is Carbamoyl phosphate synthase small chain (Buchnera aphidicola subsp. Baizongia pistaciae (strain Bp)).